The following is a 662-amino-acid chain: Glycine--tRNA ligase beta subunit (662 aa).

It belongs to the class-II aminoacyl-tRNA synthetase family. Tetramer of two alpha and two beta subunits.

Its subcellular location is the cytoplasm. The enzyme catalyses tRNA(Gly) + glycine + ATP = glycyl-tRNA(Gly) + AMP + diphosphate. The sequence is that of Glycine--tRNA ligase beta subunit from Rickettsia akari (strain Hartford).